Consider the following 221-residue polypeptide: Transcription factor HES-4 (221 aa).

Low complexity predominate over residues methionine 1–serine 22. Residues methionine 1–arginine 49 form a disordered region. The segment covering threonine 24–arginine 35 has biased composition (basic and acidic residues). A bHLH domain is found at histidine 34–leucine 91. Residues tyrosine 110 to leucine 143 enclose the Orange domain. Residues leucine 201–arginine 221 form a disordered region. Residues tryptophan 216–tryptophan 219 carry the WRPW motif motif.

Transcription repression requires formation of a complex with a corepressor protein of the Groucho/TLE family.

It is found in the nucleus. Functionally, transcriptional repressor. Binds DNA on N-box motifs: 5'-CACNAG-3'. This is Transcription factor HES-4 (HES4) from Homo sapiens (Human).